The sequence spans 349 residues: Two pore potassium channel b (349 aa).

The tract at residues Met-1–Pro-53 is disordered. The Cytoplasmic segment spans residues Met-1–Arg-66. Residues Leu-67–Met-87 form a helical membrane-spanning segment. An intramembrane region (pore-forming) is located at residues Asp-100–Pro-119. Residues Ala-123–Leu-143 traverse the membrane as a helical segment. The Cytoplasmic segment spans residues Ser-144–Leu-180. A helical membrane pass occupies residues Tyr-181 to Val-201. The pore-forming intramembrane region spans Asp-208–Phe-227. The chain crosses the membrane as a helical span at residues Ala-234 to Ala-254. Topologically, residues Ala-255–Arg-349 are cytoplasmic. 2 consecutive EF-hand domains span residues Leu-271–Lys-306 and Glu-310–Pro-345. Positions 284, 286, 288, 290, 295, 323, 325, 327, 329, and 334 each coordinate Ca(2+). The tract at residues His-326–Arg-349 is disordered.

Belongs to the two pore domain potassium channel (TC 1.A.1.7) family. Homodimer.

It is found in the vacuole membrane. In terms of biological role, highly selective inward-rectifying potassium channel that is specifically located in the tonoplast of protein storage vacuoles. Functions independently of the voltage difference across the membrane. This is Two pore potassium channel b (TPKB) from Oryza sativa subsp. japonica (Rice).